Reading from the N-terminus, the 439-residue chain is Cobyrinate a,c-diamide synthase (439 aa).

The GATase cobBQ-type domain maps to 238–431 (KIAVAYDKAF…AHVNFLGNIE (194 aa)). Cys-320 functions as the Nucleophile in the catalytic mechanism.

Belongs to the CobB/CbiA family. Mg(2+) serves as cofactor.

The catalysed reaction is cob(II)yrinate + 2 L-glutamine + 2 ATP + 2 H2O = cob(II)yrinate a,c diamide + 2 L-glutamate + 2 ADP + 2 phosphate + 2 H(+). The protein operates within cofactor biosynthesis; adenosylcobalamin biosynthesis; cob(II)yrinate a,c-diamide from sirohydrochlorin (anaerobic route): step 10/10. Functionally, catalyzes the ATP-dependent amidation of the two carboxylate groups at positions a and c of cobyrinate, using either L-glutamine or ammonia as the nitrogen source. The protein is Cobyrinate a,c-diamide synthase of Clostridium tetani (strain Massachusetts / E88).